A 576-amino-acid polypeptide reads, in one-letter code: Probable DNA ligase (576 aa).

Position 235 (Glu-235) interacts with ATP. Lys-237 serves as the catalytic N6-AMP-lysine intermediate. 6 residues coordinate ATP: Arg-242, Arg-257, Glu-285, Phe-324, Arg-422, and Lys-428.

The protein belongs to the ATP-dependent DNA ligase family. Mg(2+) is required as a cofactor.

It catalyses the reaction ATP + (deoxyribonucleotide)n-3'-hydroxyl + 5'-phospho-(deoxyribonucleotide)m = (deoxyribonucleotide)n+m + AMP + diphosphate.. Its function is as follows. DNA ligase that seals nicks in double-stranded DNA during DNA replication, DNA recombination and DNA repair. This is Probable DNA ligase from Koribacter versatilis (strain Ellin345).